The sequence spans 44 residues: Photosystem I reaction center subunit IX (44 aa).

Residues 7 to 27 (YLSVAPVLSTLWFGALAGLLI) form a helical membrane-spanning segment.

It belongs to the PsaJ family.

The protein resides in the plastid. The protein localises to the chloroplast thylakoid membrane. Its function is as follows. May help in the organization of the PsaE and PsaF subunits. The chain is Photosystem I reaction center subunit IX from Solanum bulbocastanum (Wild potato).